Reading from the N-terminus, the 726-residue chain is MRSSSLAWALGLVALANAQGSPTQWYDSITGVTFSRFYQQDTDASWGYIFPSASGGQAPDEFIGLFQGPASAGWIGNSLGGSMRNNPLLVGWVDGSTPRISARWATDYAPPSIYSGPRLTILGSSGTNGNIQRIVYRCQNCTRWTGGAGGIPTTGSAVFGWAFHSTTKPLTPSDPSSGLYRHSHAAQYGFDIGNARTTLYDYYLQQLTNAPPLSGGAPTQPPTQQPPTTTAPPPPPPSSTFVSCPGAPQPRYQMNVANGFRVAPVLGGLTMPRGITLDTRGNLLVVERGRGLTGHTLDANGCVTSSKVVIQDTQINHGIDVHPSGRRIIASSGDIAWSWDYDPATMTATNRRTLVTGMNNFYHFTRTVHISRKYPNLFALNVGSDGNIDVPTRQQNSGRAQIRVFDYDQLPQNGVPFVSQYGRVLGYGLRNDVGITEDRAGNIHSIENSLDNAYRMVNGQRRDIHTNNPAEKVYNLGDPSNPRAIFGGYPDCYTVWEPSDFTDSPKQPGDWFTQDNSGQYTDAWCNANAVKPTLLLPPHTAPLDMKFGLGNDTNLYVALHGSWNRQPPQGYKVVVVPGQYSASGEWSPTAPLAQSRTAWSDLLTNRNENQCSGFGNANCFRPVGLVWSADGQNLYVSSDTSGEVFIIKRMSGPIVQPPITQPPITTSPPTPTTPPVVQPPTTVAPPQASQTLWGQCGGQGWTGPTLCPANSVCRESNQWYSQCVPA.

The N-terminal stretch at M1–A18 is a signal peptide. Residues M83 and Y108 each contribute to the heme b site. C138 and C141 are oxidised to a cystine. N140 carries N-linked (GlcNAc...) asparagine glycosylation. The heme b site is built by R181 and H182. Residues P211–V242 form a disordered region. Positions T219–S238 are enriched in pro residues. A disulfide bond links C244 and C302. Positions 273, 363, 430, and 431 each coordinate pyrroloquinoline quinone. The Ca(2+) site is built by S449 and D451. A disulfide bridge connects residues C492 and C525. H539 is a binding site for pyrroloquinoline quinone. N551 is a glycosylation site (N-linked (GlcNAc...) asparagine). Positions 560, 563, and 564 each coordinate pyrroloquinoline quinone. Residues C611 and C619 are joined by a disulfide bond. R621 serves as a coordination point for pyrroloquinoline quinone. The span at I659–Q678 shows a compositional bias: pro residues. The tract at residues I659–S689 is disordered. Over residues P679–S689 the composition is skewed to low complexity. The CBM1 domain occupies A688–V724.

It belongs to the sugar dehydrogenase AA12 family. Ca(2+) serves as cofactor. Requires pyrroloquinoline quinone as cofactor. The cofactor is heme b.

It localises to the secreted. Pyrroloquinoline quinone (PPQ)-dependent oxidoreductase that catalyzes the oxidation of various sugars including L-galactose, L-gulose, D-talose, D-arabinose, D-lyxose, L-fucose and D-glucosone. Shows significant activity toward the reverse-chair conformation of pyranoses. Shows little or no activity toward abundant sugars such as D-glucose, D-fructose, cellobiose, as well L-xylose and L-glucose. This enzyme is able to direct electrical communication with electrodes, without artificial electron mediators, thus allowing direct electron transfer (DET)-type bioelectrocatalysis. Exhibits binding affinity for insoluble cellulose. PDH does not oxidize cello-oligosaccharides but is able to activate the C-1-oxidizing Neurospora crassa LPMO9F and the C-4-oxidizing Neurospora crassa LPMO9C thanks to the electron-tranfer activity of the cytochrome domain and the localization of PDH in the vicinity of the LPMO substrates by the CBM1 domain. The protein is Pyrroloquinoline quinone-dependent pyranose dehydrogenase of Coprinopsis cinerea (strain Okayama-7 / 130 / ATCC MYA-4618 / FGSC 9003) (Inky cap fungus).